The chain runs to 75 residues: uncharacterized protein (75 aa).

Positions 1-75 (MIKIYSTPTC…KAEIDKLIEK (75 aa)) constitute a Glutaredoxin domain. A disulfide bridge links Cys10 with Cys13.

It belongs to the glutaredoxin family.

This is an uncharacterized protein from Clostridium pasteurianum.